The following is a 475-amino-acid chain: Maintenance of mitochondrial morphology protein 1 (475 aa).

Residues M1–G14 are Lumenal-facing. A helical membrane pass occupies residues F15 to F35. At S36–R475 the chain is on the cytoplasmic side. In terms of domain architecture, SMP-LTD spans P80–P278. 2 disordered regions span residues N321–Q381 and S394–R475. Over residues P341–T351 the composition is skewed to pro residues. 2 stretches are compositionally biased toward polar residues: residues P353–P380 and S394–L403. Residues S442–S464 are compositionally biased toward low complexity.

Belongs to the MMM1 family. In terms of assembly, homodimer. Component of the ER-mitochondria encounter structure (ERMES) or MDM complex, composed of MMM1, MDM10, MDM12 and MDM34. An MMM1 homodimer associates with one molecule of MDM12 on each side in a pairwise head-to-tail manner, and the SMP-LTD domains of MMM1 and MDM12 generate a continuous hydrophobic tunnel for phospholipid trafficking.

It is found in the endoplasmic reticulum membrane. Its function is as follows. Component of the ERMES/MDM complex, which serves as a molecular tether to connect the endoplasmic reticulum (ER) and mitochondria. Components of this complex are involved in the control of mitochondrial shape and protein biogenesis, and function in nonvesicular lipid trafficking between the ER and mitochondria. The MDM12-MMM1 subcomplex functions in the major beta-barrel assembly pathway that is responsible for biogenesis of all outer membrane beta-barrel proteins, and acts in a late step after the SAM complex. The MDM10-MDM12-MMM1 subcomplex further acts in the TOM40-specific pathway after the action of the MDM12-MMM1 complex. Essential for establishing and maintaining the structure of mitochondria and maintenance of mtDNA nucleoids. The sequence is that of Maintenance of mitochondrial morphology protein 1 from Cryptococcus neoformans var. neoformans serotype D (strain B-3501A) (Filobasidiella neoformans).